Here is a 149-residue protein sequence, read N- to C-terminus: D-aminoacyl-tRNA deacylase (149 aa).

Positions 137 to 138 (GP) match the Gly-cisPro motif, important for rejection of L-amino acids motif.

It belongs to the DTD family. Homodimer.

It is found in the cytoplasm. It catalyses the reaction glycyl-tRNA(Ala) + H2O = tRNA(Ala) + glycine + H(+). It carries out the reaction a D-aminoacyl-tRNA + H2O = a tRNA + a D-alpha-amino acid + H(+). An aminoacyl-tRNA editing enzyme that deacylates mischarged D-aminoacyl-tRNAs. Also deacylates mischarged glycyl-tRNA(Ala), protecting cells against glycine mischarging by AlaRS. Acts via tRNA-based rather than protein-based catalysis; rejects L-amino acids rather than detecting D-amino acids in the active site. By recycling D-aminoacyl-tRNA to D-amino acids and free tRNA molecules, this enzyme counteracts the toxicity associated with the formation of D-aminoacyl-tRNA entities in vivo and helps enforce protein L-homochirality. The protein is D-aminoacyl-tRNA deacylase of Clostridium botulinum (strain ATCC 19397 / Type A).